A 1251-amino-acid polypeptide reads, in one-letter code: Cyclic nucleotide-gated channel beta-1 (1251 aa).

4 disordered regions span residues 1 to 75 (MLGW…QETK), 121 to 151 (ITEDPAQILGHGSTGDTGCTDEPNEALEAQD), 172 to 252 (QPPK…TRDP), and 314 to 561 (EDAH…STNS). The Cytoplasmic segment spans residues 1 to 656 (MLGWVQRVLP…SIDPLTNLMY (656 aa)). Residues 23–50 (EEEEVEPEPEMEAEVEPEPNPEEAETES) show a composition bias toward acidic residues. Positions 238–247 (GSQAQTSSLP) are enriched in polar residues. A compositionally biased stretch (basic and acidic residues) spans 335–352 (EENKAVEKMPRELSRIEE). Residues 353 to 373 (EKEDEEEEEEEEEEEEEEEVT) are compositionally biased toward acidic residues. A compositionally biased stretch (basic and acidic residues) spans 404–423 (KLWEEVGEEAKKEAEEKAKE). Positions 424 to 434 (EAEEVAEEEAE) are enriched in acidic residues. Over residues 435 to 446 (KEPQDWAETKEE) the composition is skewed to basic and acidic residues. The segment at 557 to 567 (ASTNSAIINDR) is calmodulin-binding CaM1. Residues 568–578 (LQELVKLFKER) carry the IQ-like motif. The interval 585–619 (KLIDPDVTSDEESPKPSPAKKAPEPAPDTKPAEAE) is disordered. A helical membrane pass occupies residues 657 to 678 (VLWLFFVVMAWNWNCWLIPVRW). Topologically, residues 679 to 687 (AFPYQTPDN) are extracellular. Residues 688–709 (IHHWLLMDYLCDLIYFLDITVF) form a helical membrane-spanning segment. Residues 710 to 724 (QTRLQFVRGGDIITD) lie on the Cytoplasmic side of the membrane. Residues 725-744 (KKDMRNNYLKSRRFKMDLLS) form a helical membrane-spanning segment. Residues 745-760 (LLPLDFLYLKVGVNPL) lie on the Extracellular side of the membrane. Residues 761–773 (LRLPRCLKYMAFF) traverse the membrane as a helical segment. Residues 774–785 (EFNSRLESILSK) lie on the Cytoplasmic side of the membrane. A helical transmembrane segment spans residues 786-808 (AYVYRVIRTTAYLLYSLHLNSCL). An ion conduction pathway region spans residues 786-885 (AYVYRVIRTT…IGQMRDVVGA (100 aa)). Over 809-831 (YYWASAYQGLGSTHWVYDGVGNS) the chain is Extracellular. Transmembrane regions (helical) follow at residues 832-858 (YIRCYYFAVKTLITIGGLPDPKTLFEI) and 859-884 (VFQLLNYFTGVFAFSVMIGQMRDVVG). The Cytoplasmic portion of the chain corresponds to 885-1251 (AATAGQTYYR…MPEEREEKAE (367 aa)). The segment at 888–964 (AGQTYYRSCM…NIVSKVALFQ (77 aa)) is C-linker. A cyclic nucleotide-binding domain region spans residues 968–1084 (RQMIFDMLKR…LLRKKARRML (117 aa)). The 3',5'-cyclic GMP site is built by G1029, E1030, S1032, R1042, and T1043. R1042 contributes to the 3',5'-cyclic AMP binding site. The calmodulin-binding CaM2 stretch occupies residues 1148–1154 (QQELVEQ). Positions 1151–1251 (LVEQAKSSQD…MPEEREEKAE (101 aa)) are disordered. A compositionally biased stretch (pro residues) spans 1183 to 1203 (PPAPRTPPEPPGSPPSSPPPA). Residues 1242–1251 (MPEEREEKAE) show a composition bias toward basic and acidic residues.

It belongs to the cyclic nucleotide-gated cation channel (TC 1.A.1.5) family. CNGB1 subfamily. As to quaternary structure, the rod cyclic nucleotide-gated channel is a heterotetramer composed of CNGA1 and CNGB1 subunits with 3:1 stoichiometry. CNGA1:CNGB1 channel binds Ca(2+)-bound CALM1 via CaM1 and CaM2 regions of the CNGB1 subunit; this interaction modulates the affinity of the channel for cNMPs in response to intracellular Ca(2+) levels. The olfactory cyclic nucleotide-gated channel is a heterotetramer composed of CNGA2, CNGA4 and CNGB1 subunits with 2:1:1 stoichiometry.

It localises to the cell membrane. The protein localises to the cell projection. It is found in the cilium membrane. It carries out the reaction Ca(2+)(in) = Ca(2+)(out). It catalyses the reaction Na(+)(in) = Na(+)(out). The enzyme catalyses K(+)(in) = K(+)(out). The catalysed reaction is NH4(+)(in) = NH4(+)(out). It carries out the reaction Rb(+)(in) = Rb(+)(out). It catalyses the reaction Li(+)(in) = Li(+)(out). The enzyme catalyses Cs(+)(in) = Cs(+)(out). Pore-forming subunit of the rod cyclic nucleotide-gated channel. Mediates rod photoresponses at dim light converting transient changes in intracellular cGMP levels into electrical signals. In the dark, cGMP levels are high and keep the channel open enabling a steady inward current carried by Na(+) and Ca(2+) ions that leads to membrane depolarization and neurotransmitter release from synaptic terminals. Upon photon absorption cGMP levels decline leading to channel closure and membrane hyperpolarization that ultimately slows neurotransmitter release and signals the presence of light, the end point of the phototransduction cascade. Pore-forming subunit of the olfactory cyclic nucleotide-gated channel. Operates in the cilia of olfactory sensory neurons where chemical stimulation of the odorant is converted to an electrical signal. Mediates odorant-induced cAMP-dependent Ca(2+) influx triggering neuron depolarization. The rise of intracellular Ca(2+) levels potentiates the olfactory response by activating Ca(2+)-dependent Cl(-) channels, but it also serves as a negative feedback signal to desensitize the channel for rapid adaptation to odorants. Conducts cGMP- and cAMP-gated ion currents, with permeability for monovalent and divalent cations. The selectivity for Ca(2+) over Na(+) increases with cGMP concentrations, whereas the selectivity among monovalent ions is independent of the cGMP levels. Functionally, high affinity rod photoreceptor phosphodiesterase (PDE6)-binding protein that modulates its catalytic properties: it is a regulator of spontaneous activation of rod PDE6, thereby serving to lower rod photoreceptor 'dark noise' and allowing these sensory cells to operate at the single photon detection limit. In Homo sapiens (Human), this protein is Cyclic nucleotide-gated channel beta-1.